A 622-amino-acid chain; its full sequence is Carbon monoxide dehydrogenase (622 aa).

The [4Fe-4S] cluster site is built by cysteine 40, cysteine 49, cysteine 52, cysteine 57, and cysteine 68. [Ni-4Fe-5S] cluster contacts are provided by histidine 256, cysteine 334, cysteine 442, cysteine 473, and cysteine 514.

The protein belongs to the Ni-containing carbon monoxide dehydrogenase family. In terms of assembly, homodimer. The cofactor is [4Fe-4S] cluster. Requires [Ni-4Fe-5S] cluster as cofactor.

It catalyses the reaction CO + 2 oxidized [2Fe-2S]-[ferredoxin] + H2O = 2 reduced [2Fe-2S]-[ferredoxin] + CO2 + 2 H(+). In terms of biological role, CODH oxidizes carbon monoxide coupled, via CooF, to the reduction of a hydrogen cation by a hydrogenase (possibly CooH). This is Carbon monoxide dehydrogenase (cooS) from Archaeoglobus fulgidus (strain ATCC 49558 / DSM 4304 / JCM 9628 / NBRC 100126 / VC-16).